A 196-amino-acid chain; its full sequence is CASP-like protein 2A2 (196 aa).

Residues methionine 1–histidine 26 lie on the Cytoplasmic side of the membrane. The chain crosses the membrane as a helical span at residues phenylalanine 27 to leucine 47. Over lysine 48–cysteine 68 the chain is Extracellular. A helical membrane pass occupies residues leucine 69 to valine 89. The Cytoplasmic segment spans residues proline 90–serine 98. The helical transmembrane segment at tryptophan 99–alanine 119 threads the bilayer. Over threonine 120–arginine 148 the chain is Extracellular. A helical membrane pass occupies residues alanine 149–leucine 169. Residues serine 170–isoleucine 196 are Cytoplasmic-facing.

It belongs to the Casparian strip membrane proteins (CASP) family. As to quaternary structure, homodimer and heterodimers.

The protein resides in the cell membrane. In Picea sitchensis (Sitka spruce), this protein is CASP-like protein 2A2.